Here is a 458-residue protein sequence, read N- to C-terminus: UDP-N-acetylmuramoylalanine--D-glutamate ligase (458 aa).

Residue 119-125 coordinates ATP; it reads GSNGKTT.

It belongs to the MurCDEF family.

It is found in the cytoplasm. The enzyme catalyses UDP-N-acetyl-alpha-D-muramoyl-L-alanine + D-glutamate + ATP = UDP-N-acetyl-alpha-D-muramoyl-L-alanyl-D-glutamate + ADP + phosphate + H(+). Its pathway is cell wall biogenesis; peptidoglycan biosynthesis. In terms of biological role, cell wall formation. Catalyzes the addition of glutamate to the nucleotide precursor UDP-N-acetylmuramoyl-L-alanine (UMA). The chain is UDP-N-acetylmuramoylalanine--D-glutamate ligase from Limosilactobacillus fermentum (strain NBRC 3956 / LMG 18251) (Lactobacillus fermentum).